Reading from the N-terminus, the 383-residue chain is tRNA (adenine(58)-N(1))-methyltransferase catalytic subunit TRM61 (383 aa).

Residues Val94, 121–124 (SGSF), Glu139, Arg144, 168–169 (DV), and Asp203 contribute to the S-adenosyl-L-methionine site. At Ser302 the chain carries Phosphoserine.

Belongs to the class I-like SAM-binding methyltransferase superfamily. TRM61 family. As to quaternary structure, heterotetramer; composed of two copies of TRM6/GCD10 and two copies of TRM61/GCD14.

It localises to the nucleus. The catalysed reaction is adenosine(58) in tRNA + S-adenosyl-L-methionine = N(1)-methyladenosine(58) in tRNA + S-adenosyl-L-homocysteine + H(+). In terms of biological role, catalytic subunit of tRNA (adenine-N(1)-)-methyltransferase, which catalyzes the formation of N(1)-methyladenine at position 58 (m1A58) in initiator methionyl-tRNA. GCD14 is also required for repression of GCN4 mRNA translation by the upstream open reading frames (uORFs) under conditions of amino acid sufficiency. The sequence is that of tRNA (adenine(58)-N(1))-methyltransferase catalytic subunit TRM61 (GCD14) from Saccharomyces cerevisiae (strain ATCC 204508 / S288c) (Baker's yeast).